Here is a 188-residue protein sequence, read N- to C-terminus: Elongation factor P (188 aa).

This sequence belongs to the elongation factor P family.

The protein resides in the cytoplasm. The protein operates within protein biosynthesis; polypeptide chain elongation. Involved in peptide bond synthesis. Stimulates efficient translation and peptide-bond synthesis on native or reconstituted 70S ribosomes in vitro. Probably functions indirectly by altering the affinity of the ribosome for aminoacyl-tRNA, thus increasing their reactivity as acceptors for peptidyl transferase. This is Elongation factor P from Sulfurimonas denitrificans (strain ATCC 33889 / DSM 1251) (Thiomicrospira denitrificans (strain ATCC 33889 / DSM 1251)).